We begin with the raw amino-acid sequence, 373 residues long: ATP phosphoribosyltransferase regulatory subunit (373 aa).

This sequence belongs to the class-II aminoacyl-tRNA synthetase family. HisZ subfamily. As to quaternary structure, heteromultimer composed of HisG and HisZ subunits.

It is found in the cytoplasm. Its pathway is amino-acid biosynthesis; L-histidine biosynthesis; L-histidine from 5-phospho-alpha-D-ribose 1-diphosphate: step 1/9. Its function is as follows. Required for the first step of histidine biosynthesis. May allow the feedback regulation of ATP phosphoribosyltransferase activity by histidine. This chain is ATP phosphoribosyltransferase regulatory subunit, found in Rhizobium leguminosarum bv. trifolii (strain WSM2304).